A 491-amino-acid chain; its full sequence is Synaptotagmin-9 (491 aa).

Over M1 to V52 the chain is Vesicular. The segment at C9–Q31 is cysteine motif. Residues S53 to V73 traverse the membrane as a helical segment. Residues S74–R491 are Cytoplasmic-facing. Positions S91–T104 are enriched in polar residues. Residues S91–N147 form a disordered region. Acidic residues predominate over residues E105–L116. A compositionally biased stretch (polar residues) spans M127–G144. S177 carries the post-translational modification Phosphoserine. C2 domains follow at residues A220–K341 and D352–H485. The Ca(2+) site is built by D251, D257, D309, F310, D311, S314, D317, D383, D389, D443, and D445.

This sequence belongs to the synaptotagmin family. In terms of assembly, homodimer; disulfide-linked via the cysteine motif. Can also form heterodimers with SYT3, SYT6, SYT7 and SYT10. Interacts with DNAJC5 and SNAP25, but not with HSC70. The interaction with DNAJC5 is stimulated tenfold in presence of calcium while the interaction with SNAP25 is inhibited. Ca(2+) is required as a cofactor.

It localises to the cytoplasmic vesicle. The protein localises to the secretory vesicle. It is found in the synaptic vesicle membrane. Functionally, may be involved in Ca(2+)-dependent exocytosis of secretory vesicles through Ca(2+) and phospholipid binding to the C2 domain or may serve as Ca(2+) sensors in the process of vesicular trafficking and exocytosis. This chain is Synaptotagmin-9 (Syt9), found in Mus musculus (Mouse).